A 138-amino-acid polypeptide reads, in one-letter code: Small ribosomal subunit protein uS8 (138 aa).

The protein belongs to the universal ribosomal protein uS8 family. As to quaternary structure, part of the 30S ribosomal subunit. Contacts proteins S5 and S12.

One of the primary rRNA binding proteins, it binds directly to 16S rRNA central domain where it helps coordinate assembly of the platform of the 30S subunit. The sequence is that of Small ribosomal subunit protein uS8 (rpsH) from Thermus thermophilus (strain ATCC BAA-163 / DSM 7039 / HB27).